The following is a 120-amino-acid chain: Secreted RxLR effector protein 29 (120 aa).

The first 21 residues, 1–21 (MRRTAFIVLSLVALIAPCVTS), serve as a signal peptide directing secretion. The RxLR-dEER motif lies at 47–64 (RHLRSEANGRLAVVDEEK).

The protein belongs to the RxLR effector family.

It is found in the secreted. It localises to the host cytoplasm. The protein resides in the host nucleus. In terms of biological role, effector that acts as a broad suppressor of cell death to interrupt plant immunity. Inhibits cell death induced by cell death-inducing proteins, including the PAMP elicitor INF1 from P.infestans. This Plasmopara viticola (Downy mildew of grapevine) protein is Secreted RxLR effector protein 29.